Consider the following 620-residue polypeptide: Toxin coregulated pilus biosynthesis protein I (620 aa).

The Methyl-accepting transducer domain occupies 344–580 (TMNDLSIKQT…DVAKQMEDIR (237 aa)).

Belongs to the methyl-accepting chemotaxis (MCP) protein family.

Its subcellular location is the cell inner membrane. In terms of biological role, may function as an environmental regulator of TCP biogenesis. Negatively regulates the synthesis of the major pilin subunit of TCP (TcpA). The chain is Toxin coregulated pilus biosynthesis protein I (tcpI) from Vibrio cholerae serotype O1 (strain ATCC 39315 / El Tor Inaba N16961).